Consider the following 227-residue polypeptide: Cytochrome c oxidase subunit 2 (227 aa).

The Mitochondrial intermembrane portion of the chain corresponds to 1–14 (MTHPLQLGFQDATS). The chain crosses the membrane as a helical span at residues 15–45 (PIMEELLHFHDHTLMIVFLISSLVLYIITLM). Over 46–59 (LTTKLTHTSTMDAQ) the chain is Mitochondrial matrix. A helical transmembrane segment spans residues 60–87 (EVETVWTILPAIILILIALPSLRILYMM). The Mitochondrial intermembrane segment spans residues 88–227 (DEINNPLLTV…YFEDWSVSMT (140 aa)). Residues His161, Cys196, Glu198, Cys200, His204, and Met207 each contribute to the Cu cation site. Glu198 lines the Mg(2+) pocket. Residue Tyr218 is modified to Phosphotyrosine.

It belongs to the cytochrome c oxidase subunit 2 family. In terms of assembly, component of the cytochrome c oxidase (complex IV, CIV), a multisubunit enzyme composed of 14 subunits. The complex is composed of a catalytic core of 3 subunits MT-CO1, MT-CO2 and MT-CO3, encoded in the mitochondrial DNA, and 11 supernumerary subunits COX4I, COX5A, COX5B, COX6A, COX6B, COX6C, COX7A, COX7B, COX7C, COX8 and NDUFA4, which are encoded in the nuclear genome. The complex exists as a monomer or a dimer and forms supercomplexes (SCs) in the inner mitochondrial membrane with NADH-ubiquinone oxidoreductase (complex I, CI) and ubiquinol-cytochrome c oxidoreductase (cytochrome b-c1 complex, complex III, CIII), resulting in different assemblies (supercomplex SCI(1)III(2)IV(1) and megacomplex MCI(2)III(2)IV(2)). Found in a complex with TMEM177, COA6, COX18, COX20, SCO1 and SCO2. Interacts with TMEM177 in a COX20-dependent manner. Interacts with COX20. Interacts with COX16. It depends on Cu cation as a cofactor.

Its subcellular location is the mitochondrion inner membrane. The catalysed reaction is 4 Fe(II)-[cytochrome c] + O2 + 8 H(+)(in) = 4 Fe(III)-[cytochrome c] + 2 H2O + 4 H(+)(out). Functionally, component of the cytochrome c oxidase, the last enzyme in the mitochondrial electron transport chain which drives oxidative phosphorylation. The respiratory chain contains 3 multisubunit complexes succinate dehydrogenase (complex II, CII), ubiquinol-cytochrome c oxidoreductase (cytochrome b-c1 complex, complex III, CIII) and cytochrome c oxidase (complex IV, CIV), that cooperate to transfer electrons derived from NADH and succinate to molecular oxygen, creating an electrochemical gradient over the inner membrane that drives transmembrane transport and the ATP synthase. Cytochrome c oxidase is the component of the respiratory chain that catalyzes the reduction of oxygen to water. Electrons originating from reduced cytochrome c in the intermembrane space (IMS) are transferred via the dinuclear copper A center (CU(A)) of subunit 2 and heme A of subunit 1 to the active site in subunit 1, a binuclear center (BNC) formed by heme A3 and copper B (CU(B)). The BNC reduces molecular oxygen to 2 water molecules using 4 electrons from cytochrome c in the IMS and 4 protons from the mitochondrial matrix. In Carlito syrichta (Philippine tarsier), this protein is Cytochrome c oxidase subunit 2 (MT-CO2).